Here is a 221-residue protein sequence, read N- to C-terminus: IPSINILSFLLLSSTLSLVAFARSFTSENPIVLPTTCHDDDNLVLPEVYDQDGNPLRIGERYIIKNPLLGAGAVYLDNIGNLQCPNAVLQHMSIPQFLGKGTPVVFIRKSESDYGDVVRLMTAVYIKFFVKTTKLCVDETVWKVNNEQLVVTGGNVGNENDIFKIKKTDLVIRGMKNVYKLLHCPSHLECKNIGSTFKNGYPRLVTVNDEKDFIPFVFIKA.

An N-terminal signal peptide occupies residues 1–26; the sequence is IPSINILSFLLLSSTLSLVAFARSFT. The propeptide occupies 27 to 42; the sequence is SENPIVLPTTCHDDDN. The Vacuolar targeting signal motif lies at 29–34; that stretch reads NPIVLP. 2 disulfides stabilise this stretch: Cys84–Cys136 and Cys184–Cys190.

Belongs to the protease inhibitor I3 (leguminous Kunitz-type inhibitor) family.

The protein resides in the vacuole. Functionally, inhibitor of cysteine proteases. May protect the plant by inhibiting proteases of invading organisms. This chain is Cysteine protease inhibitor 8, found in Solanum tuberosum (Potato).